Consider the following 80-residue polypeptide: Keratin-associated protein 6-1 (80 aa).

This sequence belongs to the KRTAP type 6 family. As to quaternary structure, interacts with hair keratins.

Its function is as follows. In the hair cortex, hair keratin intermediate filaments are embedded in an interfilamentous matrix, consisting of hair keratin-associated proteins (KRTAP), which are essential for the formation of a rigid and resistant hair shaft through their extensive disulfide bond cross-linking with abundant cysteine residues of hair keratins. The matrix proteins include the high-sulfur and high-glycine-tyrosine keratins. This is Keratin-associated protein 6-1 (KRTAP6-1) from Oryctolagus cuniculus (Rabbit).